The chain runs to 324 residues: MDQSNMTSFAEEKAMNTSSRNASLGTSHPPIPIVHWVIMSISPLGFVENGILLWFLCFRMRRNPFTVYITHLSIADISLLFCIFILSIDYALDYELSSGHYYTIVTLSVTFLFGYNTGLYLLTAISVERCLSVLYPIWYRCHRPKHQSAFVCALLWALSCLVTTMEYVMCIDSGEESHSQSDCRAVIIFIAILSFLVFTPLMLVSSTILVVKIRKNTWASHSSKLYIVIMVTIIIFLIFAMPMRVLYLLYYEYWSTFGNLHNISLLFSTINSSANPFIYFFVGSSKKKRFRESLKVVLTRAFKDEMQPRRQEGNGNTVSIETVV.

The Extracellular portion of the chain corresponds to 1–35 (MDQSNMTSFAEEKAMNTSSRNASLGTSHPPIPIVH). N-linked (GlcNAc...) asparagine glycosylation is found at Asn-5, Asn-16, and Asn-21. Residues 36–60 (WVIMSISPLGFVENGILLWFLCFRM) traverse the membrane as a helical segment. Residues 61 to 64 (RRNP) lie on the Cytoplasmic side of the membrane. Residues 65–86 (FTVYITHLSIADISLLFCIFIL) form a helical membrane-spanning segment. Topologically, residues 87-103 (SIDYALDYELSSGHYYT) are extracellular. The helical transmembrane segment at 104 to 127 (IVTLSVTFLFGYNTGLYLLTAISV) threads the bilayer. Residues 128–148 (ERCLSVLYPIWYRCHRPKHQS) lie on the Cytoplasmic side of the membrane. The chain crosses the membrane as a helical span at residues 149–171 (AFVCALLWALSCLVTTMEYVMCI). Residues 172–184 (DSGEESHSQSDCR) are Extracellular-facing. A helical transmembrane segment spans residues 185 to 205 (AVIIFIAILSFLVFTPLMLVS). Topologically, residues 206–223 (STILVVKIRKNTWASHSS) are cytoplasmic. Residues 224–244 (KLYIVIMVTIIIFLIFAMPMR) traverse the membrane as a helical segment. Over 245–262 (VLYLLYYEYWSTFGNLHN) the chain is Extracellular. A helical transmembrane segment spans residues 263–283 (ISLLFSTINSSANPFIYFFVG). At 284–324 (SSKKKRFRESLKVVLTRAFKDEMQPRRQEGNGNTVSIETVV) the chain is on the cytoplasmic side.

The protein belongs to the G-protein coupled receptor 1 family. As to quaternary structure, interacts with AGTR1. Interacts with FLNA (via filamin repeat 21); increases PKA-mediated phosphorylation of FLNA. In terms of tissue distribution, expressed in platelets.

It localises to the cell membrane. Its function is as follows. Receptor for angiotensin 1-7. Acts specifically as a functional antagonist of AGTR1 (angiotensin-2 type 1 receptor), although it up-regulates AGTR1 receptor levels. Positive regulation of AGTR1 levels occurs through activation of the G-proteins GNA11 and GNAQ, and stimulation of the protein kinase C signaling cascade. The antagonist effect on AGTR1 function is probably due to AGTR1 being physically altered by MAS1. The polypeptide is Proto-oncogene Mas (Mas1) (Rattus norvegicus (Rat)).